Here is a 992-residue protein sequence, read N- to C-terminus: MKTRFNTFDIICGVAELQKLVGWRVNQIYDVDNKTYLFRMQGTGAVEKVTLLIESGTRFHTTRFEWPKNMAPSGFSMKLRKHLKNKRLEKVQQMGSDRIVDFQFGTGDAAYHVILELYDRGNVILTDYELTTLYILRPHTEGENLRFAMREKYPVERAKQPTKELELEALVKLLENARNGDYLRQILTPNLDCGPAVIEHVLLSHGLDNHVIKKETTEETPEAEDKPEKGGKKQRKKQQNTKLEQKPFDMVNDLPILQQAVKDAQELIAEGNSGKSKGYIIQVKEEKPTENGTVEFFFRNIEFHPYLFIQFKNFEKATFESFMEAVDEFYSTQESQKIDMKTLQQEREALKKLSNVKNDHAKRLEELTKVQDVDRKKAELITSNQSLVDNAIRAVQSAIASQLSWPDIHELVKEAQANGDAVASSIKQLKLETNHISLMLSDPYDNDEDDDLKDPEVTVVDVDLALSAWANARRYYDMKRSAAQKEKKTVDASQKALKSAERKTQQTLKEVRTISNIVKARKVFWFEKFYWFISSENYLVIGGRDAQQNELIVKRYMRPKDIYVHAEIQGASSVIIQNPTGEEIPPKTLLEAGSMAISYSVAWDAKVVTNSYWVTSDQVSKTAPTGEYLATGSFMIRGKKNFLPSCHLTMGLSLLFKLEDSFIERHLGERKVRSLEDDQIDPNVKENEVEHDLLSDNEDADSNINLSEPSSNTEITAFPNTEVKIEHDTGRIIVRSDSVNPEIEETKESEVVLDKILKKTDDEETTIILAGPSRKKQVSAKKTKEDKARAKQEAAKQEVPPVSSEPKNPSQVKRGQKGKLKKMKQKYKDQDDEEREIRMMILKSSGKEKPQASADKVVEKSESTKEYVKPEKSAAPKNPVELDDADEVPVGGDVDVLNSLTGQPHEGDELLFAIPVVAPYQALQNYKFKVKLTPGTGKRGKAAKLALNIFAKEKSCSAREKDLLKSIKEESLARNIPGKVKLSAPQLQKYHK.

Over residues 214–231 (KETTEETPEAEDKPEKGG) the composition is skewed to basic and acidic residues. Residues 214-245 (KETTEETPEAEDKPEKGGKKQRKKQQNTKLEQ) are disordered. Coiled coils occupy residues 331-370 (STQE…LTKV) and 481-514 (SAAQ…VRTI). 2 disordered regions span residues 688 to 715 (EVEH…NTEI) and 771 to 895 (GPSR…GDVD). The segment covering 702 to 715 (SNINLSEPSSNTEI) has biased composition (polar residues). Residues 774–839 (RKKQVSAKKT…QDDEEREIRM (66 aa)) are a coiled coil. The segment covering 782–796 (KTKEDKARAKQEAAK) has biased composition (basic and acidic residues). Residues 814–825 (RGQKGKLKKMKQ) are compositionally biased toward basic residues. Basic and acidic residues predominate over residues 845 to 874 (SGKEKPQASADKVVEKSESTKEYVKPEKSA).

The protein belongs to the NEMF family. As to quaternary structure, component of the ribosome quality control complex (RQC), composed of at least the E3 ubiquitin ligase l(3)76BDr/LTN1 and Clbn/NEMF associated with the 60S ribosomal subunit. The complex probably also contains TCF25 as well as TER94/VCP and its ubiquitin-binding cofactors. Interacts (via its C-terminus) with pros (via its homeobox). Interacts (via its N-terminus) with emb. In terms of tissue distribution, expressed in enterocytes (at protein level).

Its subcellular location is the nucleus. It localises to the cytoplasm. The protein localises to the mitochondrion outer membrane. Key component of the ribosome quality control complex (RQC), a ribosome-associated complex that mediates the extraction of incompletely synthesized nascent chains from stalled ribosomes as well as their ubiquitin-mediated proteasomal degradation. Thereby, frees 60S subunit ribosomes from the stalled translation complex and prevents the accumulation of nascent polypeptide chains that are potentially toxic for the cell. Within the RQC complex, Clbn/NEMF specifically binds stalled 60S ribosomal subunits by recognizing an exposed, nascent chain-conjugated tRNA moiety. Following binding to stalled 60S ribosomal subunits, Clbn/NEMF mediates CAT tailing by recruiting alanine-charged tRNA to the A-site and directing the elongation of stalled nascent chains independently of mRNA or 40S subunits, leading to non-templated C-terminal alanine extensions (CAT tails). On mitochondrial surface, plays a role in mitochondrial-stress induced translational termination impairment and protein carboxyl terminal extension (MISTERMINATE). Plays a role in regulating nuclear transport possibly through directly binding to both emb and cargo proteins. Plays a role in the regulation of G1-to-S cell cycle transition. Regulates S phase checkpoint by antagonizing E2F1 activity. Together with hid and tefu/ATM, plays a role in DNA damage-induced apoptosis through both p53-dependent and -independent activity. Plays an essential role in the regulation of mitochondrial structure and redox state in enterocytes which is essential for the control of intestinal stem cells proliferation and intestinal homeostasis. The protein is Ribosome quality control complex subunit NEMF homolog of Drosophila melanogaster (Fruit fly).